Consider the following 162-residue polypeptide: UPF0260 protein CC_3276 (162 aa).

Belongs to the UPF0260 family.

In Caulobacter vibrioides (strain ATCC 19089 / CIP 103742 / CB 15) (Caulobacter crescentus), this protein is UPF0260 protein CC_3276.